Reading from the N-terminus, the 383-residue chain is Na(+)/H(+) antiporter NhaA (383 aa).

11 helical membrane passes run 19–39, 56–76, 92–112, 122–142, 151–171, 174–194, 212–232, 255–275, 292–312, 326–346, and 356–376; these read AGGV…NSPL, VLHG…GLEI, ILPG…FLAL, GWAV…ALLG, IFLT…IALF, AKLS…LAAL, LWGA…ALAL, VGYG…FAGL, LLFG…WLGF, GVAV…ALAF, and VKVG…LVLL.

It belongs to the NhaA Na(+)/H(+) (TC 2.A.33) antiporter family.

It localises to the cell inner membrane. The catalysed reaction is Na(+)(in) + 2 H(+)(out) = Na(+)(out) + 2 H(+)(in). In terms of biological role, na(+)/H(+) antiporter that extrudes sodium in exchange for external protons. The polypeptide is Na(+)/H(+) antiporter NhaA (Paramagnetospirillum magneticum (strain ATCC 700264 / AMB-1) (Magnetospirillum magneticum)).